A 380-amino-acid chain; its full sequence is Pregnancy-associated glycoprotein 6 (380 aa).

An N-terminal signal peptide occupies residues 1 to 15; it reads MKWLVLLGLVSISEC. The propeptide at 16-53 is activation peptide; that stretch reads IVKIPLRRVKTMRKTLSEKNMLNNFLKEHAYRLSQISF. 2 N-linked (GlcNAc...) asparagine glycosylation sites follow: Asn57 and Asn74. Residues 71-377 enclose the Peptidase A1 domain; that stretch reads YLGNITIGTP…DRGHDRIGLA (307 aa). The active site involves Asp89. A disulfide bridge connects residues Cys102 and Cys107. N-linked (GlcNAc...) asparagine glycosylation is present at Asn125. A disulfide bridge connects residues Cys261 and Cys265. Asp270 is a catalytic residue. Cys303 and Cys337 form a disulfide bridge.

This sequence belongs to the peptidase A1 family. In terms of tissue distribution, trophoblast and placental tissue. Produced specifically in the invasive binucleate cells of the placenta.

Its subcellular location is the secreted. It is found in the extracellular space. The protein is Pregnancy-associated glycoprotein 6 of Ovis aries (Sheep).